Consider the following 396-residue polypeptide: Methionine import ATP-binding protein MetN 2 (396 aa).

The ABC transporter domain occupies 41 to 280 (VSFELVGKVF…PRHGATRALL (240 aa)). 77 to 84 (GRSGAGKS) is an ATP binding site.

It belongs to the ABC transporter superfamily. Methionine importer (TC 3.A.1.24) family. As to quaternary structure, the complex is composed of two ATP-binding proteins (MetN), two transmembrane proteins (MetI) and a solute-binding protein (MetQ).

It is found in the cell inner membrane. It catalyses the reaction L-methionine(out) + ATP + H2O = L-methionine(in) + ADP + phosphate + H(+). It carries out the reaction D-methionine(out) + ATP + H2O = D-methionine(in) + ADP + phosphate + H(+). In terms of biological role, part of the ABC transporter complex MetNIQ involved in methionine import. Responsible for energy coupling to the transport system. The polypeptide is Methionine import ATP-binding protein MetN 2 (Burkholderia pseudomallei (strain K96243)).